The chain runs to 409 residues: bZIP transcription factor 16 (409 aa).

The segment covering 1–16 (MASNEMEKSSKEKEPK) has biased composition (basic and acidic residues). Disordered stretches follow at residues 1–63 (MASN…VASS), 118–236 (NGMT…LPVS), 274–327 (MHGK…LRKQ), and 362–409 (TTEN…KDST). The span at 24-34 (APPSSQEPSSA) shows a compositional bias: low complexity. Over residues 133–145 (GDAKQSEVKEKLP) the composition is skewed to basic and acidic residues. The segment covering 152–178 (SLGSLNMITGKNNEPGKNSGASANGAY) has biased composition (polar residues). Residues 179 to 203 (SKSGESASDGSSEGSDGNSQNDSGS) show a composition bias toward low complexity. The segment covering 216–228 (NGGSANGPQNGSA) has biased composition (polar residues). The bZIP domain maps to 305-368 (ELKRQRRKQS…EELTTENTSL (64 aa)). A Bipartite nuclear localization signal motif is present at residues 307–323 (KRQRRKQSNRESARRSR). Residues 307-326 (KRQRRKQSNRESARRSRLRK) are basic motif. Residues 314-327 (SNRESARRSRLRKQ) are compositionally biased toward basic and acidic residues. The tract at residues 333–368 (LAQRAEVLNEENTNLRAEINKLKSQCEELTTENTSL) is leucine-zipper. Over residues 398–409 (AERKVDSYKDST) the composition is skewed to basic and acidic residues.

The protein belongs to the bZIP family. In terms of assembly, monomer, homodimer and heterodimers with BZIP68 and GBF1/BZIP41. Heterodimers with GBF2/BZIP54 and GBF3/BZIP55. Binds DNA as monomer and forms homo- and heterodimers. The monomeric form is redox regulated. Interacts with GIP1.

The protein resides in the nucleus. Its function is as follows. Transcriptional activator that binds to the G-box motif (5'-CACGTG-3') and other cis-acting elements with 5'-ACGT-3' core, such as Hex, C-box and as-1 motifs. Possesses high binding affinity to G-box, much lower affinity to Hex and C-box, and little affinity to as-1 element. G-box and G-box-like motifs are cis-acting elements defined in promoters of certain plant genes which are regulated by such diverse stimuli as light-induction or hormone control. Binds to the G-box motif 5'-CACGTG-3' of LHCB2.4 (At3g27690) promoter. May act as transcriptional repressor in light-regulated expression of LHCB2.4. Binds DNA as monomer. DNA-binding activity is redox-dependent. The protein is bZIP transcription factor 16 of Arabidopsis thaliana (Mouse-ear cress).